The following is a 258-amino-acid chain: uncharacterized protein (258 aa).

N-linked (GlcNAc...) asparagine; by host glycosylation is found at Asn-60, Asn-104, and Asn-113. Over residues 147 to 156 (TTRKPGQKTT) the composition is skewed to low complexity. Residues 147 to 183 (TTRKPGQKTTLSRLKTTPNKHTQHKRSTRRTSPRDYN) form a disordered region. Residues 157–166 (LSRLKTTPNK) are compositionally biased toward polar residues. The span at 167–177 (HTQHKRSTRRT) shows a compositional bias: basic residues. A glycan (N-linked (GlcNAc...) asparagine; by host) is linked at Asn-183. The chain crosses the membrane as a helical span at residues 208–228 (AHSAWILIVIIIIIVVILFFF).

The protein belongs to the RL11 family.

It localises to the membrane. This is an uncharacterized protein from Human cytomegalovirus (strain AD169) (HHV-5).